The sequence spans 205 residues: Recombination protein RecR (205 aa).

The C4-type zinc-finger motif lies at 59–74; the sequence is CAMCNTFCEGGLCDIC. The Toprim domain occupies 82 to 177; it reads RRLMVVHMPA…KVSRLSQGIP (96 aa).

The protein belongs to the RecR family.

Its function is as follows. May play a role in DNA repair. It seems to be involved in an RecBC-independent recombinational process of DNA repair. It may act with RecF and RecO. The chain is Recombination protein RecR from Neisseria meningitidis serogroup C (strain 053442).